Here is a 47-residue protein sequence, read N- to C-terminus: Sperm protamine P1 (47 aa).

This sequence belongs to the protamine P1 family. Testis.

It localises to the nucleus. It is found in the chromosome. In terms of biological role, protamines substitute for histones in the chromatin of sperm during the haploid phase of spermatogenesis. They compact sperm DNA into a highly condensed, stable and inactive complex. The chain is Sperm protamine P1 (PRM1) from Orcinus orca (Killer whale).